A 200-amino-acid polypeptide reads, in one-letter code: Snake venom metalloproteinase rhomb-I (200 aa).

In terms of domain architecture, Peptidase M12B spans 4–200 (KYIELVVVAD…RKPQCILNKP (197 aa)). E7 and D91 together coordinate Ca(2+). 3 disulfides stabilise this stretch: C115-C195, C155-C179, and C157-C162. H140 is a binding site for Zn(2+). Residue E141 is part of the active site. The Zn(2+) site is built by H144 and H150. C195 and N198 together coordinate Ca(2+).

Monomer. Zn(2+) serves as cofactor. In terms of tissue distribution, expressed by the venom gland.

It is found in the secreted. In terms of biological role, snake venom zinc metalloproteinase that induces hemorrhage. The polypeptide is Snake venom metalloproteinase rhomb-I (Lachesis muta rhombeata (Bushmaster)).